The chain runs to 150 residues: Large ribosomal subunit protein bL9 (150 aa).

It belongs to the bacterial ribosomal protein bL9 family.

In terms of biological role, binds to the 23S rRNA. In Leptothrix cholodnii (strain ATCC 51168 / LMG 8142 / SP-6) (Leptothrix discophora (strain SP-6)), this protein is Large ribosomal subunit protein bL9.